The following is a 144-amino-acid chain: uncharacterized protein (144 aa).

A helical transmembrane segment spans residues 72–90 (VAIGTSLIVGAGVAMEVSV).

It to yeast YCL21w.

The protein localises to the membrane. This is an uncharacterized protein from Saccharomyces cerevisiae (strain ATCC 204508 / S288c) (Baker's yeast).